Reading from the N-terminus, the 258-residue chain is Ribosomal RNA small subunit methyltransferase A (258 aa).

S-adenosyl-L-methionine is bound by residues His-13, Leu-15, Gly-40, Glu-61, Asp-86, and Asn-106.

It belongs to the class I-like SAM-binding methyltransferase superfamily. rRNA adenine N(6)-methyltransferase family. RsmA subfamily.

It is found in the cytoplasm. The enzyme catalyses adenosine(1518)/adenosine(1519) in 16S rRNA + 4 S-adenosyl-L-methionine = N(6)-dimethyladenosine(1518)/N(6)-dimethyladenosine(1519) in 16S rRNA + 4 S-adenosyl-L-homocysteine + 4 H(+). Specifically dimethylates two adjacent adenosines (A1518 and A1519) in the loop of a conserved hairpin near the 3'-end of 16S rRNA in the 30S particle. May play a critical role in biogenesis of 30S subunits. This Coxiella burnetii (strain CbuG_Q212) (Coxiella burnetii (strain Q212)) protein is Ribosomal RNA small subunit methyltransferase A.